The following is an 816-amino-acid chain: S-layer protein (816 aa).

The signal sequence occupies residues Met-1–Ala-29. SLH domains lie at Ala-30–Pro-93, Ser-94–Gly-150, and Pro-152–Val-215. The BIG2 domain occupies Phe-403–Leu-480.

The protein resides in the secreted. The protein localises to the cell wall. It is found in the S-layer. The S-layer is a paracrystalline mono-layered assembly of proteins which coat the surface of bacteria. The polypeptide is S-layer protein (Bacillus thuringiensis subsp. finitimus).